A 164-amino-acid chain; its full sequence is Peroxynitrite isomerase 2 (164 aa).

Positions 17-23 (GSWAGRG) match the GXWXGXG motif. Heme b is bound at residue H155.

Belongs to the nitrobindin family. In terms of assembly, homodimer. Heme b serves as cofactor.

The catalysed reaction is peroxynitrite = nitrate. Its pathway is nitrogen metabolism. In terms of biological role, heme-binding protein able to scavenge peroxynitrite and to protect free L-tyrosine against peroxynitrite-mediated nitration, by acting as a peroxynitrite isomerase that converts peroxynitrite to nitrate. Therefore, this protein likely plays a role in peroxynitrite sensing and in the detoxification of reactive nitrogen and oxygen species (RNS and ROS, respectively). Is able to bind nitric oxide (NO) in vitro, but may act as a sensor of peroxynitrite levels in vivo. This chain is Peroxynitrite isomerase 2, found in Mycobacterium bovis (strain BCG / Pasteur 1173P2).